The chain runs to 431 residues: Histidinol dehydrogenase (431 aa).

3 residues coordinate NAD(+): tyrosine 130, glutamine 191, and asparagine 214. The substrate site is built by serine 237, glutamine 259, and histidine 262. Zn(2+)-binding residues include glutamine 259 and histidine 262. Active-site proton acceptor residues include glutamate 327 and histidine 328. Residues histidine 328, aspartate 361, glutamate 415, and histidine 420 each contribute to the substrate site. Position 361 (aspartate 361) interacts with Zn(2+). Histidine 420 serves as a coordination point for Zn(2+).

This sequence belongs to the histidinol dehydrogenase family. It depends on Zn(2+) as a cofactor.

It catalyses the reaction L-histidinol + 2 NAD(+) + H2O = L-histidine + 2 NADH + 3 H(+). It participates in amino-acid biosynthesis; L-histidine biosynthesis; L-histidine from 5-phospho-alpha-D-ribose 1-diphosphate: step 9/9. Functionally, catalyzes the sequential NAD-dependent oxidations of L-histidinol to L-histidinaldehyde and then to L-histidine. The sequence is that of Histidinol dehydrogenase from Rhodopseudomonas palustris (strain ATCC BAA-98 / CGA009).